A 268-amino-acid polypeptide reads, in one-letter code: Hydroxyethylthiazole kinase (268 aa).

Met45 contributes to the substrate binding site. Positions 121 and 167 each coordinate ATP. Gly194 provides a ligand contact to substrate.

Belongs to the Thz kinase family. Mg(2+) serves as cofactor.

It carries out the reaction 5-(2-hydroxyethyl)-4-methylthiazole + ATP = 4-methyl-5-(2-phosphooxyethyl)-thiazole + ADP + H(+). It participates in cofactor biosynthesis; thiamine diphosphate biosynthesis; 4-methyl-5-(2-phosphoethyl)-thiazole from 5-(2-hydroxyethyl)-4-methylthiazole: step 1/1. In terms of biological role, catalyzes the phosphorylation of the hydroxyl group of 4-methyl-5-beta-hydroxyethylthiazole (THZ). This chain is Hydroxyethylthiazole kinase, found in Bacillus thuringiensis (strain Al Hakam).